Here is a 419-residue protein sequence, read N- to C-terminus: Creatine kinase S-type, mitochondrial (419 aa).

A mitochondrion-targeting transit peptide spans 1 to 39; the sequence is MASTFSKLLTGRNASLLFATLGTSALTTGYLVNRQKVCA. A cardiolipin-binding region spans residues 40 to 64; the sequence is EARDQHKLFPPSADYPDLRKHNNCM. The Phosphagen kinase N-terminal domain occupies 46–132; sequence KLFPPSADYP…FDPVIKLRHN (87 aa). The Phosphagen kinase C-terminal domain occupies 159–401; sequence YVLSSRVRTG…NYLVDCEKKL (243 aa). ATP contacts are provided by residues 162-166 and His-225; that span reads SSRVR. Position 255 is a phosphotyrosine (Tyr-255). ATP is bound by residues Arg-270, Arg-326, 354–359, and Asp-369; that span reads RGTGGV. A Phosphothreonine modification is found at Thr-356.

The protein belongs to the ATP:guanido phosphotransferase family. In terms of assembly, exists as an octamer composed of four CKMT2 homodimers.

It is found in the mitochondrion inner membrane. It carries out the reaction creatine + ATP = N-phosphocreatine + ADP + H(+). Its function is as follows. Reversibly catalyzes the transfer of phosphate between ATP and various phosphogens (e.g. creatine phosphate). Creatine kinase isoenzymes play a central role in energy transduction in tissues with large, fluctuating energy demands, such as skeletal muscle, heart, brain and spermatozoa. In Oryctolagus cuniculus (Rabbit), this protein is Creatine kinase S-type, mitochondrial (CKMT2).